We begin with the raw amino-acid sequence, 777 residues long: DISP complex protein LRCH3 (777 aa).

LRR repeat units follow at residues 56–79 (AAVT…AANH), 81–104 (LTDT…ACHF), 105–127 (VSLE…ILNL), 128–150 (QALT…LCNL), 152–172 (LKVL…IGHL), 173–195 (RHLM…IGNL), 196–218 (EALR…LAEL), 220–239 (LIRL…CYRN), 240–264 (LRHL…CIKG), and 266–290 (VHIF…DRRP). Residues 56-290 (AAVTGVLSLS…PDLPDYDRRP (235 aa)) form a mediates interaction with DOCK7 region. Phosphoserine is present on residues S324, S415, and S419. Residues 382–648 (TAEEEEAEVR…DSTDSITGQN (267 aa)) form a mediates direct interaction with MYO6 region. The disordered stretch occupies residues 568–590 (FTPLKSDDRPNALLSSPATETVH). Residues S611 and S628 each carry the phosphoserine modification. A disordered region spans residues 621 to 653 (ETNKGHASPLPPSAAPTTDSTDSITGQNSRQRE). Low complexity predominate over residues 635 to 645 (APTTDSTDSIT). Residues 652–765 (REEELELIDQ…VTVQALLELA (114 aa)) form the Calponin-homology (CH) domain.

As to quaternary structure, component of the DOCK7-induced septin displacement/DISP complex, at least composed of DOCK7, LRCH3 and MYO6.

The protein localises to the cytoplasm. As part of the DISP complex, may regulate the association of septins with actin and thereby regulate the actin cytoskeleton. The chain is DISP complex protein LRCH3 from Homo sapiens (Human).